Consider the following 156-residue polypeptide: Small ribosomal subunit protein uS7 (156 aa).

Belongs to the universal ribosomal protein uS7 family. Part of the 30S ribosomal subunit. Contacts proteins S9 and S11.

Functionally, one of the primary rRNA binding proteins, it binds directly to 16S rRNA where it nucleates assembly of the head domain of the 30S subunit. Is located at the subunit interface close to the decoding center, probably blocks exit of the E-site tRNA. The sequence is that of Small ribosomal subunit protein uS7 from Mycobacterium bovis (strain ATCC BAA-935 / AF2122/97).